A 432-amino-acid chain; its full sequence is UDP-N-acetylmuramate--L-alanine ligase (432 aa).

G109 to T115 provides a ligand contact to ATP.

It belongs to the MurCDEF family.

It localises to the cytoplasm. It carries out the reaction UDP-N-acetyl-alpha-D-muramate + L-alanine + ATP = UDP-N-acetyl-alpha-D-muramoyl-L-alanine + ADP + phosphate + H(+). It functions in the pathway cell wall biogenesis; peptidoglycan biosynthesis. Functionally, cell wall formation. This chain is UDP-N-acetylmuramate--L-alanine ligase, found in Campylobacter jejuni subsp. jejuni serotype O:2 (strain ATCC 700819 / NCTC 11168).